Consider the following 766-residue polypeptide: Discoidin domain-containing receptor A (766 aa).

The N-terminal stretch at 1 to 18 (MQIALVLLAIYGTTTTNT) is a signal peptide. Residues 19–372 (LRIDQCGENA…PPSSAATQQL (354 aa)) are Extracellular-facing. F5/8 type C domains lie at 24-180 (CGEN…IHGC) and 195-351 (SRLD…FTSA). Cysteine 24 and cysteine 180 form a disulfide bridge. 7 N-linked (GlcNAc...) asparagine glycosylation sites follow: asparagine 87, asparagine 103, asparagine 129, asparagine 242, asparagine 268, asparagine 311, and asparagine 353. A helical membrane pass occupies residues 373–393 (LVVCGIIFLTIFACVAYCVSV). The Cytoplasmic portion of the chain corresponds to 394–766 (CLKRRQKNKS…FERLVKPFQD (373 aa)). Positions 475 to 501 (NFPPPPEGREEHTYSQPVSPENSSNGS) are disordered. Polar residues predominate over residues 488–501 (YSQPVSPENSSNGS). A Protein kinase domain is found at 519-766 (LLIGKAIGEG…FERLVKPFQD (248 aa)). Residues 525–533 (IGEGKFTMI) and lysine 547 each bind ATP.

It belongs to the protein kinase superfamily. Tyr protein kinase family. Insulin receptor subfamily. In terms of tissue distribution, expressed in neurons in head and tail, some motoneurons in ventral nerve cord, in PVP interneurons, pharynx and stomato-intestinal muscle.

It localises to the cell membrane. The protein resides in the cell projection. Its subcellular location is the axon. It is found in the perikaryon. Its function is as follows. Receptor which, together with svh-4, is involved in axon guidance to establish the tracts for the ventral and dorsal nerve cords during nervous system development. May play a role in axon regeneration following injury in D-type motor neurons. The chain is Discoidin domain-containing receptor A from Caenorhabditis elegans.